The following is a 247-amino-acid chain: Mast cell protease 8 (247 aa).

The signal sequence occupies residues Met-1 to Gly-19. Residue Glu-20 is a propeptide, activation peptide. The 222-residue stretch at Ile-21 to Lys-242 folds into the Peptidase S1 domain. The N-linked (GlcNAc...) asparagine glycan is linked to Asn-41. Cys-49 and Cys-65 are joined by a disulfide. Catalysis depends on His-64, which acts as the Charge relay system. N-linked (GlcNAc...) asparagine glycosylation is found at Asn-71 and Asn-101. The active-site Charge relay system is Asp-107. Intrachain disulfides connect Cys-141/Cys-206 and Cys-171/Cys-185. Asn-151 and Asn-179 each carry an N-linked (GlcNAc...) asparagine glycan. The active-site Charge relay system is the Ser-200.

Belongs to the peptidase S1 family. Granzyme subfamily.

The protein localises to the secreted. The protein resides in the cytoplasmic granule. This is Mast cell protease 8 (Mcpt8) from Mus musculus (Mouse).